Here is a 503-residue protein sequence, read N- to C-terminus: Aromatase (503 aa).

A run of 3 helical transmembrane segments spans residues 19 to 39, 51 to 71, and 303 to 323; these read EVAP…LLVW, GYFL…MGIG, and MLIA…FLIA. Positions 309 and 374 each coordinate substrate. Cysteine 437 is a heme binding site.

The protein belongs to the cytochrome P450 family. Heme serves as cofactor.

The protein resides in the endoplasmic reticulum membrane. It is found in the microsome membrane. It carries out the reaction testosterone + 3 reduced [NADPH--hemoprotein reductase] + 3 O2 = 17beta-estradiol + formate + 3 oxidized [NADPH--hemoprotein reductase] + 4 H2O + 4 H(+). It catalyses the reaction androst-4-ene-3,17-dione + 3 reduced [NADPH--hemoprotein reductase] + 3 O2 = estrone + formate + 3 oxidized [NADPH--hemoprotein reductase] + 4 H2O + 4 H(+). The enzyme catalyses androst-4-ene-3,17-dione + reduced [NADPH--hemoprotein reductase] + O2 = 19-hydroxyandrost-4-ene-3,17-dione + oxidized [NADPH--hemoprotein reductase] + H2O + H(+). The catalysed reaction is 19-hydroxyandrost-4-ene-3,17-dione + reduced [NADPH--hemoprotein reductase] + O2 = 19-oxo-androst-4-ene-3,17-dione + oxidized [NADPH--hemoprotein reductase] + 2 H2O + H(+). It carries out the reaction 19-oxo-androst-4-ene-3,17-dione + reduced [NADPH--hemoprotein reductase] + O2 = estrone + formate + oxidized [NADPH--hemoprotein reductase] + H2O + 2 H(+). It catalyses the reaction estrone + reduced [NADPH--hemoprotein reductase] + O2 = 2-hydroxyestrone + oxidized [NADPH--hemoprotein reductase] + H2O + H(+). The enzyme catalyses 17beta-hydroxy-5alpha-androstan-3-one + reduced [NADPH--hemoprotein reductase] + O2 = 17beta,19-dihydroxy-3-oxo-5alpha-androstanone + oxidized [NADPH--hemoprotein reductase] + H2O + H(+). The catalysed reaction is 17beta,19-dihydroxy-3-oxo-5alpha-androstanone + reduced [NADPH--hemoprotein reductase] + O2 = 17beta-hydroxy-3,19-dioxo-5alpha-androstanone + oxidized [NADPH--hemoprotein reductase] + 2 H2O + H(+). It carries out the reaction 17beta-hydroxy-3,19-dioxo-5alpha-androstanone + reduced [NADPH--hemoprotein reductase] + O2 = 17beta-hydroxy-3-oxo-19-nor-5alpha-androst-1-ene + formate + oxidized [NADPH--hemoprotein reductase] + H2O + 2 H(+). It functions in the pathway steroid hormone biosynthesis. Its function is as follows. A cytochrome P450 monooxygenase that catalyzes the conversion of C19 androgens, androst-4-ene-3,17-dione (androstenedione) and testosterone to the C18 estrogens, estrone and estradiol, respectively. Catalyzes three successive oxidations of C19 androgens: two conventional oxidations at C19 yielding 19-hydroxy and 19-oxo/19-aldehyde derivatives, followed by a third oxidative aromatization step that involves C1-beta hydrogen abstraction combined with cleavage of the C10-C19 bond to yield a phenolic A ring and formic acid. Alternatively, the third oxidative reaction yields a 19-norsteroid and formic acid. Converts dihydrotestosterone to delta1,10-dehydro 19-nordihydrotestosterone and may play a role in homeostasis of this potent androgen. Also displays 2-hydroxylase activity toward estrone. Mechanistically, uses molecular oxygen inserting one oxygen atom into a substrate, and reducing the second into a water molecule, with two electrons provided by NADPH via cytochrome P450 reductase (CPR; NADPH-ferrihemoprotein reductase). This chain is Aromatase (CYP19A1), found in Leucopleurus acutus (Atlantic white-sided dolphin).